Consider the following 414-residue polypeptide: Enterobactin exporter EntS (414 aa).

Residues Met-1–Ala-21 lie on the Cytoplasmic side of the membrane. The chain crosses the membrane as a helical span at residues Val-22–Val-42. Residues Gln-43 to Gly-55 are Periplasmic-facing. A helical membrane pass occupies residues Leu-56–Ala-76. The Cytoplasmic segment spans residues Asp-77–Lys-83. A helical transmembrane segment spans residues Val-84–Leu-104. Residues Leu-105 to Ser-109 are Periplasmic-facing. Residues Leu-110–Ala-130 form a helical membrane-spanning segment. Residues Leu-131–Arg-156 are Cytoplasmic-facing. Residues Leu-157–Trp-177 form a helical membrane-spanning segment. Position 178 (Asn-178) is a topological domain, periplasmic. Residues Tyr-179–Leu-199 form a helical membrane-spanning segment. Over Pro-200–Arg-218 the chain is Cytoplasmic. A helical transmembrane segment spans residues Phe-219–Ala-239. Residues Ser-240–Ser-256 are Periplasmic-facing. The chain crosses the membrane as a helical span at residues Ala-257–Thr-277. Over Ser-278 to Pro-287 the chain is Cytoplasmic. Residues Gly-288–Ile-307 form a helical membrane-spanning segment. Residues Met-308 to Ala-313 are Periplasmic-facing. A helical membrane pass occupies residues Gly-314–Leu-336. At Gln-337–Asn-356 the chain is on the cytoplasmic side. Residues Val-357–Val-377 form a helical membrane-spanning segment. Residue Ala-378 is a topological domain, periplasmic. The helical transmembrane segment at Ser-379 to Gly-399 threads the bilayer. Residues Glu-400–Gly-414 are Cytoplasmic-facing.

Belongs to the major facilitator superfamily. EntS (TC 2.A.1.38) family.

The protein resides in the cell inner membrane. Component of an export pathway for enterobactin. This Salmonella paratyphi A (strain ATCC 9150 / SARB42) protein is Enterobactin exporter EntS.